A 109-amino-acid polypeptide reads, in one-letter code: MLDELRCEACSAGAIGLTSEEQQQLLSELDGWALIHRDGIAQLEKRYRFKNFKQAWAFSNQIAELAEQEFHNPAILLEWGNVTVTWWSHSIKGLHKNDFICAAKCDALT.

This sequence belongs to the pterin-4-alpha-carbinolamine dehydratase family.

It carries out the reaction (4aS,6R)-4a-hydroxy-L-erythro-5,6,7,8-tetrahydrobiopterin = (6R)-L-erythro-6,7-dihydrobiopterin + H2O. The chain is Putative pterin-4-alpha-carbinolamine dehydratase from Vibrio cholerae serotype O1 (strain ATCC 39315 / El Tor Inaba N16961).